We begin with the raw amino-acid sequence, 530 residues long: BTB/POZ domain-containing protein 3 (530 aa).

Residues 23 to 48 (KNRSKKGSKKANSSGGGGGGGSVGSG) are disordered. Positions 36–46 (SGGGGGGGSVG) are enriched in gly residues. Positions 128–198 (ADVHFVVGPP…IYCDEIDLAA (71 aa)) constitute a BTB domain. The 66-residue stretch at 243 to 308 (FEEPDLTQRC…NWAEVECQRQ (66 aa)) folds into the BACK domain.

In terms of tissue distribution, in the somatosensory cortex, specifically expressed in spiny stellate neurons during barrel formation. Also expressed in the olfactory bulb, piriform cortex and hippocampus.

The protein resides in the cytoplasm. Its subcellular location is the cytosol. It localises to the nucleus. Its function is as follows. Acts as a key regulator of dendritic field orientation during development of sensory cortex. Also directs dendrites toward active axon terminals when ectopically expressed. This is BTB/POZ domain-containing protein 3 (Btbd3) from Mus musculus (Mouse).